We begin with the raw amino-acid sequence, 350 residues long: MIDRLIVAPPEFQIYRDEHGNRLPRPFGLPICLLFTYLCNTSAGYDLFRKPAFNTAMKTLLDSWGLYLTTKDSAKLLTDCEGGWFSEEALQEFESDSRGKFEETYVCPDPDAVNRGFSSWDAFFTREVQPNARPVEAPDDKSVIHNPCESYLHCIARDVKCHDLFWLKGNIYSLYDMLNRDHKLAKQFVGGTIYQGFLSPVDYHRWRSPVDGTIKKTEIVAGTYYAALPDAGAPEGNQYQAAGDLRGALKRSQTWLAMVAARALVYIEADNPDIGLVCFIAVGMVEVSTCEVTVKRGQKVSAGSELGMFHFGGSSFVLVFGPQACITFPEDVVLGKHVKLNSILARVHKA.

It belongs to the phosphatidylserine decarboxylase family.

Its pathway is secondary metabolite biosynthesis. Decarboxylase; part of the gene cluster that mediates the biosynthesis of the psychoactive metabolites ibotenic acid and muscimol. The first committed step is glutamate hydroxylation by the 2-oxoglutarate-dependent dioxygenase iboH, and the last step is decarboxylation of ibotenic acid to muscimol by the decarboxylase iboD. The order of the intermediate reactions is somewhat ambiguous. IboA likely activates the carboxylic acid at position 5 to introduce an amide bond, and the flavin monooxygenase iboF generates the N-O bond. There are several options for the latter step. One option is that iboF directly hydroxylates the amide nitrogen formed by iboA to produce a hydroxamic acid species. Another option is that iboF hydroxylates an external N-containing compound, whose resulting N-O bond is subsequently introduced into the hydroxyglutamate scaffold. The paralogous PLP-dependent cystathionine gamma-synthase-like enzymes iboG1 and iboG2 are likely involved in substitution of the OH group at position 3 by the O-N moiety. The first cyclic intermediate is most probably tricholomic acid which is likely desaturated to ibotenic acid by the cytochrome P450 monooxygenase iboC. This is Decarboxylase iboD from Amanita muscaria (strain Koide BX008).